We begin with the raw amino-acid sequence, 111 residues long: Sulditoxin subunit B (111 aa).

Positions 1-19 (MKTLLLALAVVVLVCLGSA) are cleaved as a signal peptide. Residues 20 to 34 (NELGLGRQQIDRGRR) constitute a propeptide that is removed on maturation. At glutamine 35 the chain carries Pyrrolidone carboxylic acid. Cystine bridges form between cysteine 44–cysteine 68, cysteine 47–cysteine 55, cysteine 61–cysteine 87, cysteine 91–cysteine 102, and cysteine 103–cysteine 108.

The protein belongs to the three-finger toxin family. Ancestral subfamily. Boigatoxin sub-subfamily. As to quaternary structure, heterodimer of sulditoxin subunits A and B; probably disulfide-linked. In terms of tissue distribution, expressed by the venom gland.

Its subcellular location is the secreted. Reptile-specific neurotoxin (tested on geckos). Inhibits nicotinic acetylcholine receptor (nAChR). Not toxic to mammals (tested on mice). This chain is Sulditoxin subunit B, found in Spilotes sulphureus (Amazon puffing snake).